The sequence spans 1478 residues: FYVE and coiled-coil domain-containing protein 1 (1478 aa).

An N-acetylalanine modification is found at Ala2. A coiled-coil region spans residues 4–33 (TNAESQLQRIIRDLQDAVTELSKEFQEAGE). The region spanning 36–169 (TDDSTSLHKF…VQFDLASRGF (134 aa)) is the RUN domain. Ser196 carries the post-translational modification Phosphoserine. The stretch at 225–280 (NNEALEGFDEMRLELDQLEVREKQLRERMQQLDRENQELRAAVSQQGEQLQTERER) forms a coiled coil. Ser342 is modified (phosphoserine). Thr381 is subject to Phosphothreonine. Coiled-coil stretches lie at residues 394–555 (SDAA…MLER) and 596–1151 (QEAQ…KDAL). The segment at 586-613 (GKPEEEQRGLQEAQLDDTKVQEGSQEEE) is disordered. A Phosphoserine modification is found at Ser878. The FYVE-type zinc finger occupies 1173-1231 (DTEANHCLDCKREFSWMVRRHHCRICGRIFCYYCCNNYVLSKHGGKKERCCRACFQKLS). Zn(2+) is bound by residues Cys1179, Cys1182, Cys1195, Cys1198, Cys1203, Cys1206, Cys1223, and Cys1226. Positions 1231 to 1261 (SEGPGSPDSSGSGTSQGEPSPALSPASPGPQ) are enriched in low complexity. 2 disordered regions span residues 1231–1277 (SEGP…PPDD) and 1294–1332 (SGSSLPETPTETDSLDPNAAEQDTTSTSLTPEDTEDMPV). 2 stretches are compositionally biased toward polar residues: residues 1294–1305 (SGSSLPETPTET) and 1314–1324 (EQDTTSTSLTP). A GOLD domain is found at 1337-1466 (EICLLKSGEL…SKKVFYHLTV (130 aa)).

In terms of assembly, can form homodimers. Interacts (via C-terminus) with MAP1LC3B. Interacts with RAB7A; the interaction with RAB7A induces FYCO1 recruitment to late endosomal/lysosomal compartments. Interacts with MAP1LC3B. In terms of tissue distribution, expressed in heart and skeletal muscle.

The protein localises to the cytoplasmic vesicle. Its subcellular location is the autophagosome. It localises to the endosome. The protein resides in the lysosome. Functionally, may mediate microtubule plus end-directed vesicle transport. The protein is FYVE and coiled-coil domain-containing protein 1 (FYCO1) of Homo sapiens (Human).